Here is a 127-residue protein sequence, read N- to C-terminus: Protein pkiA (127 aa).

The HIT domain occupies 16–127 (IFAKIISGAI…GGRQMNWPPG (112 aa)).

In Dictyostelium discoideum (Social amoeba), this protein is Protein pkiA (pkiA).